A 248-amino-acid chain; its full sequence is MNRQPIVQLSNLSWTFREGETRRQVLDHITFDFEPGEFVALLGQSGSGKSTLLNLISGIEKPTTGDVTINGFAITQKTERDRTLFRRDQIGIVFQFFNLIPTLTVLENITLPQELAGVSQRKAAVVARDLLEKVGMADRERTFPDKLSGGEQQRVAISRALAHNPMLVLADEPTGNLDSDTGDKVLDVLLDLTRQAGKTLIMATHSPSMTQHADRVVNLQGGRLIPAVNRENQTDQPASTILLPTSYE.

In terms of domain architecture, ABC transporter spans 7 to 246 (VQLSNLSWTF…PASTILLPTS (240 aa)). 43 to 50 (GQSGSGKS) lines the ATP pocket.

It belongs to the ABC transporter superfamily.

This is an uncharacterized protein from Mycobacterium tuberculosis (strain CDC 1551 / Oshkosh).